A 110-amino-acid chain; its full sequence is UPF0060 membrane protein Ajs_2087 (110 aa).

The next 4 membrane-spanning stretches (helical) occupy residues 7-27, 33-53, 63-83, and 86-106; these read LALFLLTAVAEIVGCYLPWLW, SAWLLVPAAASLALFAWLLTL, AAYGGVYVAVALVWLWTVDGV, and GPWDWLGVAVTLCGMAIIAFA.

Belongs to the UPF0060 family.

The protein resides in the cell inner membrane. The protein is UPF0060 membrane protein Ajs_2087 of Acidovorax sp. (strain JS42).